Consider the following 509-residue polypeptide: Aspartic proteinase oryzasin-1 (509 aa).

A signal peptide spans 1-24; that stretch reads MGTRSVALVLLAAVLLQALLPASA. Residues 25–67 constitute a propeptide, activation peptide; it reads AEGLVRIALKKRPIDENSRVAARLSGEEGARRLGLRGANSLGG. Residues 85 to 506 enclose the Peptidase A1 domain; the sequence is YFGEIGVGTP…DYGKMRVGFA (422 aa). Asp-103 is an active-site residue. A disulfide bridge connects residues Cys-116 and Cys-122. Asn-252 is a glycosylation site (N-linked (GlcNAc...) asparagine). A disulfide bridge links Cys-281 with Cys-285. Asp-290 is a catalytic residue. In terms of domain architecture, Saposin B-type spans 315-420; the sequence is VVSQECKTVV…NQLCDKLPSP (106 aa). Intrachain disulfides connect Cys-320–Cys-414, Cys-345–Cys-386, Cys-351–Cys-383, and Cys-428–Cys-465. N-linked (GlcNAc...) asparagine glycosylation is present at Asn-400.

The protein belongs to the peptidase A1 family.

The protein localises to the vacuole. In terms of biological role, involved in the breakdown of propeptides of storage proteins in protein-storage vacuoles. The protein is Aspartic proteinase oryzasin-1 of Oryza sativa subsp. japonica (Rice).